We begin with the raw amino-acid sequence, 307 residues long: Anchor protein (307 aa).

It localises to the virion. Its function is as follows. Anchors indirectly the receptor binding (RBP) protein (depolymerase) to the virion. This Klebsiella phage KP34 (Bacteriophage KP34) protein is Anchor protein.